The primary structure comprises 126 residues: MYLSILAVGIGGALGSLFRWFLGLRLNALFPALPLGTLASNVIAGYIIGAAVAYFGRNPQIAPEWRLFIITGLMGGLSTFSTFSAEVVQHLQQGRLNWAAGEIAIHVTASVIATVLGITTVAVVTR.

4 consecutive transmembrane segments (helical) span residues 3–23 (LSIL…WFLG), 35–55 (LGTL…VAYF), 68–88 (FIIT…AEVV), and 103–123 (IAIH…TVAV). Residues glycine 75 and serine 78 each coordinate Na(+).

This sequence belongs to the fluoride channel Fluc/FEX (TC 1.A.43) family.

The protein resides in the cell inner membrane. It catalyses the reaction fluoride(in) = fluoride(out). Na(+) is not transported, but it plays an essential structural role and its presence is essential for fluoride channel function. Its function is as follows. Fluoride-specific ion channel. Important for reducing fluoride concentration in the cell, thus reducing its toxicity. The chain is Fluoride-specific ion channel FluC from Paraburkholderia phymatum (strain DSM 17167 / CIP 108236 / LMG 21445 / STM815) (Burkholderia phymatum).